A 125-amino-acid chain; its full sequence is Small ribosomal subunit protein uS12 (125 aa).

Positions 1-31 are disordered; it reads MPTINQLVRQGREVETTKSKSPAMQNSPQRR. The segment covering 19-29 has biased composition (polar residues); it reads SKSPAMQNSPQ. Position 89 is a 3-methylthioaspartic acid (Asp-89).

Belongs to the universal ribosomal protein uS12 family. As to quaternary structure, part of the 30S ribosomal subunit. Contacts proteins S8 and S17. May interact with IF1 in the 30S initiation complex.

Functionally, with S4 and S5 plays an important role in translational accuracy. In terms of biological role, interacts with and stabilizes bases of the 16S rRNA that are involved in tRNA selection in the A site and with the mRNA backbone. Located at the interface of the 30S and 50S subunits, it traverses the body of the 30S subunit contacting proteins on the other side and probably holding the rRNA structure together. The combined cluster of proteins S8, S12 and S17 appears to hold together the shoulder and platform of the 30S subunit. The sequence is that of Small ribosomal subunit protein uS12 from Paracidovorax citrulli (strain AAC00-1) (Acidovorax citrulli).